The chain runs to 221 residues: Kynurenine formamidase (221 aa).

Phe30 contacts substrate. Zn(2+) is bound by residues His60, His64, and Asp66. His70 serves as the catalytic Proton donor/acceptor. Zn(2+) contacts are provided by His172 and Glu184.

This sequence belongs to the Cyclase 1 superfamily. KynB family. In terms of assembly, homodimer. Requires Zn(2+) as cofactor.

It catalyses the reaction N-formyl-L-kynurenine + H2O = L-kynurenine + formate + H(+). It participates in amino-acid degradation; L-tryptophan degradation via kynurenine pathway; L-kynurenine from L-tryptophan: step 2/2. Functionally, catalyzes the hydrolysis of N-formyl-L-kynurenine to L-kynurenine, the second step in the kynurenine pathway of tryptophan degradation. The sequence is that of Kynurenine formamidase from Polaromonas sp. (strain JS666 / ATCC BAA-500).